Reading from the N-terminus, the 149-residue chain is Ribonuclease pancreatic (149 aa).

A signal peptide spans 1-25; the sequence is MGLEKSLMLFPLFVLLLGWVQPSLG. The tract at residues 30–49 is disordered; sequence AQKFQRQHMDPAGSSSNSPT. Residues K32 and R35 each coordinate substrate. The active-site Proton acceptor is the H37. 4 disulfides stabilise this stretch: C51–C109, C65–C120, C83–C135, and C90–C97. Residue 66–70 participates in substrate binding; the sequence is KPVNT. N-linked (GlcNAc...) asparagine glycosylation occurs at N87. K91 provides a ligand contact to substrate. H144 functions as the Proton donor in the catalytic mechanism.

This sequence belongs to the pancreatic ribonuclease family. In terms of assembly, monomer. Interacts with and forms tight 1:1 complexes with RNH1. Dimerization of two such complexes may occur. Interaction with RNH1 inhibits this protein. Pancreas.

The protein resides in the secreted. The enzyme catalyses an [RNA] containing cytidine + H2O = an [RNA]-3'-cytidine-3'-phosphate + a 5'-hydroxy-ribonucleotide-3'-[RNA].. It carries out the reaction an [RNA] containing uridine + H2O = an [RNA]-3'-uridine-3'-phosphate + a 5'-hydroxy-ribonucleotide-3'-[RNA].. Functionally, endonuclease that catalyzes the cleavage of RNA on the 3' side of pyrimidine nucleotides. Acts on single-stranded and double-stranded RNA. The sequence is that of Ribonuclease pancreatic (Rnase1) from Mus saxicola (Brown spiny mouse).